The following is a 363-amino-acid chain: sn-glycerol-3-phosphate import ATP-binding protein UgpC (363 aa).

Residues 4–235 (VVLRNVRKTY…PATTFVASFI (232 aa)) form the ABC transporter domain. 37-44 (GPSGCGKS) provides a ligand contact to ATP.

This sequence belongs to the ABC transporter superfamily. sn-glycerol-3-phosphate importer (TC 3.A.1.1.3) family. The complex is composed of two ATP-binding proteins (UgpC), two transmembrane proteins (UgpA and UgpE) and a solute-binding protein (UgpB).

It is found in the cell inner membrane. It carries out the reaction sn-glycerol 3-phosphate(out) + ATP + H2O = sn-glycerol 3-phosphate(in) + ADP + phosphate + H(+). In terms of biological role, part of the ABC transporter complex UgpBAEC involved in sn-glycerol-3-phosphate (G3P) import. Responsible for energy coupling to the transport system. The protein is sn-glycerol-3-phosphate import ATP-binding protein UgpC of Rhodopseudomonas palustris (strain ATCC BAA-98 / CGA009).